The chain runs to 351 residues: DNA nickase (351 aa).

Fe cation is bound by residues H241, E245, and H303.

Its function is as follows. Acts as a DNA nickase. The chain is DNA nickase from Nostoc sp. (strain PCC 7120 / SAG 25.82 / UTEX 2576).